The sequence spans 186 residues: Ribosome-recycling factor (186 aa).

It belongs to the RRF family.

It localises to the cytoplasm. Functionally, responsible for the release of ribosomes from messenger RNA at the termination of protein biosynthesis. May increase the efficiency of translation by recycling ribosomes from one round of translation to another. This chain is Ribosome-recycling factor, found in Burkholderia multivorans (strain ATCC 17616 / 249).